We begin with the raw amino-acid sequence, 2492 residues long: Talin-A (2492 aa).

In terms of domain architecture, FERM spans 84 to 365 (RPQKFKLLDG…GYIEIIMKAR (282 aa)). The I/LWEQ domain occupies 2250–2492 (EEDNVLEDLE…NSRKQNYNKN (243 aa)).

It is found in the cytoplasm. Its subcellular location is the cytoskeleton. The protein resides in the cell cortex. Functionally, actin-binding protein that may be involved in the control of cell motility and chemotaxis. The sequence is that of Talin-A (talA) from Dictyostelium discoideum (Social amoeba).